Consider the following 293-residue polypeptide: GTP cyclohydrolase FolE2 (293 aa).

It belongs to the GTP cyclohydrolase IV family.

It carries out the reaction GTP + H2O = 7,8-dihydroneopterin 3'-triphosphate + formate + H(+). It functions in the pathway cofactor biosynthesis; 7,8-dihydroneopterin triphosphate biosynthesis; 7,8-dihydroneopterin triphosphate from GTP: step 1/1. Converts GTP to 7,8-dihydroneopterin triphosphate. This is GTP cyclohydrolase FolE2 from Pseudomonas entomophila (strain L48).